The chain runs to 204 residues: Imidazole glycerol phosphate synthase subunit HisH 1 (204 aa).

Residues 5–204 (KVVIIDTGCA…AKLIQNFLEL (200 aa)) enclose the Glutamine amidotransferase type-1 domain. The Nucleophile role is filled by C80. Active-site residues include H186 and E188.

In terms of assembly, heterodimer of HisH and HisF.

It is found in the cytoplasm. It catalyses the reaction 5-[(5-phospho-1-deoxy-D-ribulos-1-ylimino)methylamino]-1-(5-phospho-beta-D-ribosyl)imidazole-4-carboxamide + L-glutamine = D-erythro-1-(imidazol-4-yl)glycerol 3-phosphate + 5-amino-1-(5-phospho-beta-D-ribosyl)imidazole-4-carboxamide + L-glutamate + H(+). The catalysed reaction is L-glutamine + H2O = L-glutamate + NH4(+). The protein operates within amino-acid biosynthesis; L-histidine biosynthesis; L-histidine from 5-phospho-alpha-D-ribose 1-diphosphate: step 5/9. IGPS catalyzes the conversion of PRFAR and glutamine to IGP, AICAR and glutamate. The HisH subunit provides the glutamine amidotransferase activity that produces the ammonia necessary to HisF for the synthesis of IGP and AICAR. In Vibrio vulnificus (strain YJ016), this protein is Imidazole glycerol phosphate synthase subunit HisH 1 (hisH1).